The primary structure comprises 180 residues: tRNA (cytidine(56)-2'-O)-methyltransferase (180 aa).

Position 85 (L85) interacts with S-adenosyl-L-methionine.

This sequence belongs to the aTrm56 family. Homodimer.

Its subcellular location is the cytoplasm. The catalysed reaction is cytidine(56) in tRNA + S-adenosyl-L-methionine = 2'-O-methylcytidine(56) in tRNA + S-adenosyl-L-homocysteine + H(+). Its function is as follows. Specifically catalyzes the AdoMet-dependent 2'-O-ribose methylation of cytidine at position 56 in tRNAs. This Methanobrevibacter smithii (strain ATCC 35061 / DSM 861 / OCM 144 / PS) protein is tRNA (cytidine(56)-2'-O)-methyltransferase.